We begin with the raw amino-acid sequence, 317 residues long: Exopolysaccharide production protein ExoZ (317 aa).

The next 7 membrane-spanning stretches (helical) occupy residues 14 to 34 (TIGA…MWVI), 53 to 73 (IVPV…AGLF), 100 to 120 (IWPV…YAVF), 132 to 152 (LPVV…VAFD), 185 to 205 (LAVG…IGVL), 206 to 226 (GLPF…IGVL), and 268 to 288 (IGLG…LIGI).

The protein belongs to the acyltransferase 3 family.

Its subcellular location is the cell membrane. Functionally, required for the acetyl modification of the third sugar (glucose) of the octasaccharide subunit of succinoglycan (EPS I). In Rhizobium meliloti (strain 1021) (Ensifer meliloti), this protein is Exopolysaccharide production protein ExoZ (exoZ).